A 347-amino-acid chain; its full sequence is NADH-quinone oxidoreductase subunit H (347 aa).

Transmembrane regions (helical) follow at residues 13-33, 82-102, 115-135, 161-181, 198-218, 248-268, 286-306, and 325-345; these read LIIA…VAYL, GVFL…WAVI, VGIL…IMGG, IGFV…TDIV, FLDW…ISAL, FLLF…LMTV, VPGI…FAMV, and VFLP…KVFG.

It belongs to the complex I subunit 1 family. As to quaternary structure, NDH-1 is composed of 14 different subunits. Subunits NuoA, H, J, K, L, M, N constitute the membrane sector of the complex.

It is found in the cell inner membrane. It catalyses the reaction a quinone + NADH + 5 H(+)(in) = a quinol + NAD(+) + 4 H(+)(out). Functionally, NDH-1 shuttles electrons from NADH, via FMN and iron-sulfur (Fe-S) centers, to quinones in the respiratory chain. The immediate electron acceptor for the enzyme in this species is believed to be ubiquinone. Couples the redox reaction to proton translocation (for every two electrons transferred, four hydrogen ions are translocated across the cytoplasmic membrane), and thus conserves the redox energy in a proton gradient. This subunit may bind ubiquinone. The chain is NADH-quinone oxidoreductase subunit H from Brucella melitensis biotype 1 (strain ATCC 23456 / CCUG 17765 / NCTC 10094 / 16M).